The sequence spans 955 residues: Glycine dehydrogenase (decarboxylating) (955 aa).

Residue lysine 705 is modified to N6-(pyridoxal phosphate)lysine.

The protein belongs to the GcvP family. The glycine cleavage system is composed of four proteins: P, T, L and H. It depends on pyridoxal 5'-phosphate as a cofactor.

The enzyme catalyses N(6)-[(R)-lipoyl]-L-lysyl-[glycine-cleavage complex H protein] + glycine + H(+) = N(6)-[(R)-S(8)-aminomethyldihydrolipoyl]-L-lysyl-[glycine-cleavage complex H protein] + CO2. Functionally, the glycine cleavage system catalyzes the degradation of glycine. The P protein binds the alpha-amino group of glycine through its pyridoxal phosphate cofactor; CO(2) is released and the remaining methylamine moiety is then transferred to the lipoamide cofactor of the H protein. This Aliivibrio fischeri (strain MJ11) (Vibrio fischeri) protein is Glycine dehydrogenase (decarboxylating).